A 398-amino-acid polypeptide reads, in one-letter code: Cytochrome b (398 aa).

A run of 4 helical transmembrane segments spans residues 33-53 (FGSL…FLAM), 77-98 (WLIR…YLHI), 113-133 (WNIG…GYVL), and 178-198 (FFAF…IHLL). Heme b is bound by residues His83 and His97. His182 and His196 together coordinate heme b. His201 serves as a coordination point for a ubiquinone. 4 helical membrane passes run 226–246 (YKDL…SLFA), 288–308 (LGGV…PILH), 320–340 (FTQL…WIGG), and 347–367 (YVVI…FLIP).

It belongs to the cytochrome b family. As to quaternary structure, the cytochrome bc1 complex contains 3 respiratory subunits (MT-CYB, CYC1 and UQCRFS1), 2 core proteins (UQCRC1 and UQCRC2) and probably 6 low-molecular weight proteins. The cofactor is heme b.

Its subcellular location is the mitochondrion inner membrane. Functionally, component of the ubiquinol-cytochrome c reductase complex (complex III or cytochrome b-c1 complex) that is part of the mitochondrial respiratory chain. The b-c1 complex mediates electron transfer from ubiquinol to cytochrome c. Contributes to the generation of a proton gradient across the mitochondrial membrane that is then used for ATP synthesis. The polypeptide is Cytochrome b (mt-cyb) (Channa asiatica (Small snakehead)).